The chain runs to 253 residues: Chloride intracellular channel protein 4 (253 aa).

Position 2 is an N-acetylalanine (A2). The segment at 2-101 (ALSMPLNGLK…EEFLEEVLCP (100 aa)) is required for insertion into the membrane. S4 is subject to Phosphoserine. N6-acetyllysine is present on K24. Positions 35–38 (CPFS) match the G-site motif. The helical transmembrane segment at 37–57 (FSQRLFMILWLKGVVFSVTTV) threads the bilayer. Residues 81-244 (NSEVKTDVNK…PSDKEVEIAY (164 aa)) form the GST C-terminal domain. N6-acetyllysine is present on K130. A phosphoserine mark is found at S132, S167, and S236. Y244 bears the Phosphotyrosine mark.

This sequence belongs to the chloride channel CLIC family. In terms of assembly, monomer. Interacts with HRH3. In terms of tissue distribution, detected in brain, in cell bodies and dendrites of Purkinje cells in cerebellar neurons (at protein level). Expressed neonatal and adult cardiomyocytes (at protein level). Marked expression was found in hippocampus and cerebellum, and in many other tissues.

It localises to the cytoplasm. The protein resides in the cytoskeleton. Its subcellular location is the microtubule organizing center. The protein localises to the centrosome. It is found in the cytoplasmic vesicle membrane. It localises to the nucleus. The protein resides in the cell membrane. Its subcellular location is the mitochondrion. The protein localises to the cell junction. It is found in the endoplasmic reticulum membrane. It catalyses the reaction chloride(in) = chloride(out). The enzyme catalyses thiocyanate(in) = thiocyanate(out). It carries out the reaction nitrate(in) = nitrate(out). The catalysed reaction is iodide(out) = iodide(in). It catalyses the reaction bromide(in) = bromide(out). The enzyme catalyses fluoride(in) = fluoride(out). It carries out the reaction choline(out) = choline(in). Channel activity is redox- and pH-regulated. Anion vs cation selectivity is enhanced when fully oxidized. In the soluble state, catalyzes glutaredoxin-like thiol disulfide exchange reactions with reduced glutathione as electron donor. Can insert into membranes and form voltage-dependent multi-ion conductive channels. Membrane insertion seems to be redox-regulated and may occur only under oxidizing conditions. Has alternate cellular functions like a potential role in angiogenesis or in maintaining apical-basolateral membrane polarity during mitosis and cytokinesis. Could also promote endothelial cell proliferation and regulate endothelial morphogenesis (tubulogenesis). Promotes cell-surface expression of HRH3. The polypeptide is Chloride intracellular channel protein 4 (Clic4) (Rattus norvegicus (Rat)).